The following is a 208-amino-acid chain: NAD-dependent protein deacylase (208 aa).

A Deacetylase sirtuin-type domain is found at 1–208; sequence MKPICVVLSG…NTGFNPVTGW (208 aa). Position 10 to 29 (10 to 29) interacts with NAD(+); it reads GAGISAESGIPTYRAEDGLW. Substrate contacts are provided by Tyr54 and Arg57. Residue 87–90 coordinates NAD(+); the sequence is QNVE. His105 acts as the Proton acceptor in catalysis. Residues 170 to 172 and 197 to 199 each bind NAD(+); these read GTS and NPN.

Belongs to the sirtuin family. Class III subfamily.

Its subcellular location is the cytoplasm. It catalyses the reaction N(6)-acetyl-L-lysyl-[protein] + NAD(+) + H2O = 2''-O-acetyl-ADP-D-ribose + nicotinamide + L-lysyl-[protein]. It carries out the reaction N(6)-succinyl-L-lysyl-[protein] + NAD(+) + H2O = 2''-O-succinyl-ADP-D-ribose + nicotinamide + L-lysyl-[protein]. NAD-dependent lysine deacetylase and desuccinylase that specifically removes acetyl and succinyl groups on target proteins. Modulates the activities of several proteins which are inactive in their acylated form. This is NAD-dependent protein deacylase from Aggregatibacter actinomycetemcomitans (Actinobacillus actinomycetemcomitans).